The primary structure comprises 109 residues: Thiosulfate sulfurtransferase GlpE (109 aa).

One can recognise a Rhodanese domain in the interval 16 to 104 (RNAGAVIVDI…WRHTYPSDVE (89 aa)). The active-site Cysteine persulfide intermediate is the Cys64.

This sequence belongs to the GlpE family.

It is found in the cytoplasm. The enzyme catalyses thiosulfate + hydrogen cyanide = thiocyanate + sulfite + 2 H(+). It catalyses the reaction thiosulfate + [thioredoxin]-dithiol = [thioredoxin]-disulfide + hydrogen sulfide + sulfite + 2 H(+). Functionally, transferase that catalyzes the transfer of sulfur from thiosulfate to thiophilic acceptors such as cyanide or dithiols. May function in a CysM-independent thiosulfate assimilation pathway by catalyzing the conversion of thiosulfate to sulfite, which can then be used for L-cysteine biosynthesis. The sequence is that of Thiosulfate sulfurtransferase GlpE from Stutzerimonas stutzeri (strain A1501) (Pseudomonas stutzeri).